A 141-amino-acid chain; its full sequence is HTH-type transcriptional regulator ZntR (141 aa).

Positions 1–70 (MYRIGELAKM…LESIRELLSI (70 aa)) constitute an HTH merR-type domain. Positions 4–23 (IGELAKMAEVTPDTIRYYEK) form a DNA-binding region, H-T-H motif. Zn(2+)-binding residues include cysteine 114, cysteine 115, histidine 119, and cysteine 124.

In terms of assembly, homodimer.

Its function is as follows. Zinc-responsive transcriptional regulator of zntA. The polypeptide is HTH-type transcriptional regulator ZntR (zntR) (Escherichia coli O157:H7).